The primary structure comprises 380 residues: MEWTEERAAALREARCVVVKVGSAVLTTETGVNLAVIDSLAAQLSALQESGKRVVLVSSGAVAAGRSALRDCCEIAGMPHKQAASAVGQSRLMHHYDEAFARYGHLSAQVLLTRDDLRNRERFLNARNTFQALLDWGVIPVVNENDTVAVQELKFGDNDCLASLLLNVVEGDLYVNLTSASGVYADNPQTNPEAGILPCIEDVHTLDLDVMCGGKTSVGTGGMYSKLLAASRAAQLGVPTLILPGREPRILERAFSGEPVGTWVRPEARVVSRRKYWLAYQSEPSGTVTVDEGAARALLQQGGSLLPGGVCDVSGAFEPGALVRIAGPDGTVIAVGLSNYGDRDLVRIKGHRRHEVAAILGDAHFPEVVHRDNMLLDAVV.

Residue Lys20 participates in ATP binding. Residues Ser59, Asp146, and Asn158 each contribute to the substrate site. 220-226 lines the ATP pocket; sequence TGGMYSK. Positions 285-363 constitute a PUA domain; that stretch reads SGTVTVDEGA…HEVAAILGDA (79 aa).

The protein belongs to the glutamate 5-kinase family.

The protein resides in the cytoplasm. It catalyses the reaction L-glutamate + ATP = L-glutamyl 5-phosphate + ADP. It functions in the pathway amino-acid biosynthesis; L-proline biosynthesis; L-glutamate 5-semialdehyde from L-glutamate: step 1/2. In terms of biological role, catalyzes the transfer of a phosphate group to glutamate to form L-glutamate 5-phosphate. The polypeptide is Glutamate 5-kinase (Nitratidesulfovibrio vulgaris (strain ATCC 29579 / DSM 644 / CCUG 34227 / NCIMB 8303 / VKM B-1760 / Hildenborough) (Desulfovibrio vulgaris)).